The primary structure comprises 1023 residues: Probable beta-glucosidase E (1023 aa).

The interval 1 to 51 is disordered; that stretch reads MPKSYTPVHDSIPEEDHFSSDDESNFRLHRIDRSASRSQSPKENEGEPSIL. The Cytoplasmic segment spans residues 1-128; that stretch reads MPKSYTPVHD…AVYYSKTWWR (128 aa). A compositionally biased stretch (basic and acidic residues) spans 11–45; sequence SIPEEDHFSSDDESNFRLHRIDRSASRSQSPKENE. A helical; Signal-anchor for type II membrane protein membrane pass occupies residues 129–149; it reads TLVVVIIALGLLVWGFLKYAS. The Extracellular segment spans residues 150–1023; it reads TRGDIWEEYD…NLPLGKPFDP (874 aa). Asn199 and Asn387 each carry an N-linked (GlcNAc...) asparagine glycan. Asp415 is an active-site residue. N-linked (GlcNAc...) asparagine glycosylation is found at Asn458 and Asn497. Disordered regions lie at residues 485–515 and 822–841; these read WESP…GSPG and NPSR…PSYD. Low complexity predominate over residues 827 to 838; the sequence is PAARPPDAVAPP. A glycan (N-linked (GlcNAc...) asparagine) is linked at Asn848. The tract at residues 873-909 is disordered; it reads ATTPPPPNPEASGSATDQKPHRTKPSDAGGGAGGNPS. N-linked (GlcNAc...) asparagine glycans are attached at residues Asn964 and Asn979.

The protein belongs to the glycosyl hydrolase 3 family.

Its subcellular location is the cell membrane. The enzyme catalyses Hydrolysis of terminal, non-reducing beta-D-glucosyl residues with release of beta-D-glucose.. It participates in glycan metabolism; cellulose degradation. Beta-glucosidases are one of a number of cellulolytic enzymes involved in the degradation of cellulosic biomass. Catalyzes the last step releasing glucose from the inhibitory cellobiose. The sequence is that of Probable beta-glucosidase E (bglE) from Emericella nidulans (strain FGSC A4 / ATCC 38163 / CBS 112.46 / NRRL 194 / M139) (Aspergillus nidulans).